The sequence spans 197 residues: Methylamine utilization protein MauD (197 aa).

A helical membrane pass occupies residues 3-23 (FLIASNILLWIAFLGVTVVML). The Thioredoxin domain maps to 48-180 (PDIGDMAPEF…LESLLEADKT (133 aa)).

It is found in the membrane. It participates in one-carbon metabolism; methylamine degradation. May be specifically involved in the processing, transport, and/or maturation of the MADH beta-subunit. The sequence is that of Methylamine utilization protein MauD (mauD) from Paracoccus versutus (Thiobacillus versutus).